The primary structure comprises 290 residues: MFKGSIVAIVTPFKNGAVDEEKLRELVEFQIENGTDAIVPCGTTGESSTLDYEEHDRVIEIVVEQVKKRVPVIAGTGSNSTKEAIEMTSHAKTLGADGALLVTPYYNKPTQEGLFLHYKAVADAVALPQILYNVPGRTGVNLLPETVARLAEHKNIVAIKEATGSLQQASEIIDLCGDKIDVFSGDDFITFPMMACGAKGVISVTANIMPKEVAALVDAFFAGKMEEARQWHLKLLKISNAMFIESNPVPVKTAVALMGKCSAEVRLPLAPLAEANKVKLVAIMKEYGLI.

Pyruvate is bound at residue Thr-44. Catalysis depends on Tyr-132, which acts as the Proton donor/acceptor. Catalysis depends on Lys-160, which acts as the Schiff-base intermediate with substrate. Ile-202 is a binding site for pyruvate.

This sequence belongs to the DapA family. In terms of assembly, homotetramer; dimer of dimers.

The protein resides in the cytoplasm. The enzyme catalyses L-aspartate 4-semialdehyde + pyruvate = (2S,4S)-4-hydroxy-2,3,4,5-tetrahydrodipicolinate + H2O + H(+). It participates in amino-acid biosynthesis; L-lysine biosynthesis via DAP pathway; (S)-tetrahydrodipicolinate from L-aspartate: step 3/4. Catalyzes the condensation of (S)-aspartate-beta-semialdehyde [(S)-ASA] and pyruvate to 4-hydroxy-tetrahydrodipicolinate (HTPA). The chain is 4-hydroxy-tetrahydrodipicolinate synthase from Geotalea uraniireducens (strain Rf4) (Geobacter uraniireducens).